The sequence spans 245 residues: Transmembrane and ubiquitin-like domain-containing protein 1 (245 aa).

The segment at 2 to 30 is required to release iHOPS from membranes; the sequence is ALIEGVGDEVTVLFAVLACLLVLALAWVS. Residues 11–31 form a helical membrane-spanning segment; sequence VTVLFAVLACLLVLALAWVST. Residues 33-100 are disordered; that stretch reads TTESTDPQPQ…ASTPPDSPQE (68 aa). Phosphoserine is present on residues Ser-73, Ser-97, and Ser-126. A Ubiquitin-like domain is found at 102–175; that stretch reads LLLRLKFLND…LHCHVSTRVG (74 aa). 2 helical membrane-spanning segments follow: residues 194-214 and 219-239; these read IGSLLLPLLLLLLLLLWYCQI and FFPLTATLGLAGFTLLLSLLA.

As to quaternary structure, interacts with EEF1A1, CAMLG, GRIA2 and GRIP1. Interacts with NPM1 and CDKN2A; TMUB1 can enhance interaction between NPM1 and CDKN2A and is proposed to bridge the proteins; proposed to be mediated by iHOPS. Interacts with TUBG1. Interacts with ERLIN2 and AMFR; TMUB1 promotes the interaction of ERLIN2 with AMFR. Post-translationally, isoform 1 (lHOPS) is processed by regulated intramembrane proteolysis (RIP) in the N-terminus to release iHOPS from membranes. In terms of processing, isoform 2 seems to undergo a selective cleavage in the C-terminal region to release an additional cytoplasmic form. As to expression, expressed in adult brain; at protein level. Isoform 1 (lHOPS) is highly expressed in small intestine, stomach and epididymis. Isoform 2 (sHOPS) and iHOPS are abundantly expressed in brain, liver and adrenal gland.

It is found in the membrane. Its subcellular location is the postsynaptic cell membrane. The protein localises to the recycling endosome. It localises to the cytoplasm. The protein resides in the nucleus. It is found in the nucleolus. Its subcellular location is the cytoskeleton. The protein localises to the microtubule organizing center. It localises to the centrosome. Functionally, involved in sterol-regulated ubiquitination and degradation of HMG-CoA reductase HMGCR. Involved in positive regulation of AMPA-selective glutamate receptor GRIA2 recycling to the cell surface. Acts as a negative regulator of hepatocyte growth during regeneration. In terms of biological role, may contribute to the regulation of translation during cell-cycle progression. May contribute to the regulation of cell proliferation. May be involved in centrosome assembly. Modulates stabilization and nucleolar localization of tumor suppressor CDKN2A and enhances association between CDKN2A and NPM1. The sequence is that of Transmembrane and ubiquitin-like domain-containing protein 1 (Tmub1) from Mus musculus (Mouse).